The following is a 173-amino-acid chain: Large ribosomal subunit protein uL10 (173 aa).

Belongs to the universal ribosomal protein uL10 family. In terms of assembly, part of the ribosomal stalk of the 50S ribosomal subunit. The N-terminus interacts with L11 and the large rRNA to form the base of the stalk. The C-terminus forms an elongated spine to which L12 dimers bind in a sequential fashion forming a multimeric L10(L12)X complex.

Forms part of the ribosomal stalk, playing a central role in the interaction of the ribosome with GTP-bound translation factors. This Desulfatibacillum aliphaticivorans protein is Large ribosomal subunit protein uL10.